The following is an 858-amino-acid chain: DNA mismatch repair protein MutS (858 aa).

602-609 provides a ligand contact to ATP; sequence GPNMSGKS.

It belongs to the DNA mismatch repair MutS family.

Functionally, this protein is involved in the repair of mismatches in DNA. It is possible that it carries out the mismatch recognition step. This protein has a weak ATPase activity. Overexpression of mutSL partially suppresses the high spontaneous mutation frequency of a ytkD/mutM/mutY triple disruption which lacks the system required to prevent damage by oxidized guanine (8-oxo-dGTP). This suggests that MutSL also functions to repair mismatches due to oxidative stress in both growing and stationary phase cells. This Bacillus subtilis (strain 168) protein is DNA mismatch repair protein MutS.